A 622-amino-acid polypeptide reads, in one-letter code: MAIQTQLPCDGDGVCMRCQVTPPSEETLTCGTCVTPWHVSCLLPESLASSTGDWECPDCSGVVVPSAAPGTGISGPESSGSVLVAAIRAIQADVTLTEAEKAKKRQRLMSGGGDDGVDDEEKKKLEIFCSICIQLPERPVTTPCGHNFCLKCFEKWAVGQGKLTCMICRSKIPRHVAKNPRINLALVSAIRLANVTKCSGEATAAKVHHIIRNQDRPDKAFTTERAVKTGKANAASGKFFVTIPRDHFGPIPAANDVTRNQGVLVGESWEDRQECRQWGVHFPHVAGIAGQAAVGAQSVALSGGYDDDEDHGEWFLYTGSGGRDLSGNKRVNKIQSSDQAFKNMNEALRLSCKMGYPVRVVRSWKEKRSAYAPAEGVRYDGVYRIEKCWSNVGVQGLHKMCRYLFVRCDNEPAPWTSDEHGDRPRPLPDVPELENATDLFVRKESPSWGFDEAEGRWKWMKSPPVSRMALDTEERKKNKRAKKGNNAMKARLLKEFSCQICRKVLSLPVTTPCAHNFCKACLEAKFAGITQLRDRSNGVRKLRAKKNIMTCPCCTTDLSEFLQNPQVNREMMEIIENFKKSEEEAEVAESSNISEEEEEESEPPTKKIKMDNNSVGDTSLSA.

Residues 12–62 (DGVCMRCQVTPPSEETLTCGTCVTPWHVSCLLPESLASSTGDWECPDCSGV) form a PHD-type zinc finger. The RING-type 1 zinc finger occupies 129–169 (CSICIQLPERPVTTPCGHNFCLKCFEKWAVGQGKLTCMICR). The 150-residue stretch at 258 to 407 (TRNQGVLVGE…HKMCRYLFVR (150 aa)) folds into the YDG domain. Residues 498–555 (CQICRKVLSLPVTTPCAHNFCKACLEAKFAGITQLRDRSNGVRKLRAKKNIMTCPCCT) form an RING-type 2 zinc finger. Positions 566–602 (QVNREMMEIIENFKKSEEEAEVAESSNISEEEEEESE) form a coiled coil. Residues 579-622 (KKSEEEAEVAESSNISEEEEEESEPPTKKIKMDNNSVGDTSLSA) form a disordered region. The segment covering 611–622 (DNNSVGDTSLSA) has biased composition (polar residues).

The protein localises to the nucleus. The enzyme catalyses S-ubiquitinyl-[E2 ubiquitin-conjugating enzyme]-L-cysteine + [acceptor protein]-L-lysine = [E2 ubiquitin-conjugating enzyme]-L-cysteine + N(6)-ubiquitinyl-[acceptor protein]-L-lysine.. It participates in protein modification; protein ubiquitination. Its function is as follows. E3 ubiquitin-protein ligase. May participate in CpG methylation-dependent transcriptional regulation. This is Putative E3 ubiquitin-protein ligase ORTHRUS 4 (ORTH4) from Arabidopsis thaliana (Mouse-ear cress).